The following is a 425-amino-acid chain: Fe(2+) transport protein 3, chloroplastic (425 aa).

A helical membrane pass occupies residues 65 to 85; sequence FVAIASILLAGAAGVTIPLIG. Residues 86–97 lie on the Cytoplasmic side of the membrane; the sequence is RNRRFLQTDGNL. The helical transmembrane segment at 98 to 118 threads the bilayer; that stretch reads FVTAKAFAAGVILATGFVHML. Topologically, residues 119–137 are lumenal; the sequence is AGGTEALKNPCLPDFPWSK. A helical transmembrane segment spans residues 138–158; that stretch reads FPFPGFFAMIAALITLFVDFM. Residues 159-269 are Cytoplasmic-facing; it reads GTQYYERKQE…GLDAVNGARH (111 aa). Residues 270–290 form a helical membrane-spanning segment; it reads IVVSQVLELGIVSHSIIIGLS. The Lumenal segment spans residues 291-301; sequence LGVSQSPCTIR. A helical transmembrane segment spans residues 302–322; sequence PLIAALSFHQFFEGFALGGCI. Residues 323 to 333 are Cytoplasmic-facing; that stretch reads SQAQFRNKSAT. Residues 334–354 traverse the membrane as a helical segment; it reads IMACFFALTTPIGIGIGTAVA. Residues 355-369 lie on the Lumenal side of the membrane; sequence SSFNSHSVGALVTEG. A helical transmembrane segment spans residues 370–390; the sequence is ILDSLSAGILVYMALVDLIAA. Topologically, residues 391-404 are cytoplasmic; sequence DFLSTKMRCNFRLQ. A helical membrane pass occupies residues 405-425; the sequence is IVSYVMLFLGAGLMSSLAIWA.

Belongs to the ZIP transporter (TC 2.A.5) family.

The protein localises to the plastid. The protein resides in the chloroplast thylakoid membrane. May play a role in the transport of iron in the plastids. The sequence is that of Fe(2+) transport protein 3, chloroplastic (IRT3) from Arabidopsis thaliana (Mouse-ear cress).